Here is a 425-residue protein sequence, read N- to C-terminus: Tyrosine--tRNA ligase (425 aa).

Tyr-37 is an L-tyrosine binding site. The 'HIGH' region signature appears at 42–51 (PTADSLHLGH). L-tyrosine is bound by residues Tyr-175 and Gln-179. The 'KMSKS' region signature appears at 235–239 (KFGKT). Lys-238 serves as a coordination point for ATP. Residues 357 to 415 (QDLQQALVNAELAPSRGQARKLIEAKSVSINGSLQTDAEYTFGEDDRLFGQYTLLRRGK) form the S4 RNA-binding domain.

Belongs to the class-I aminoacyl-tRNA synthetase family. TyrS type 1 subfamily. Homodimer.

The protein localises to the cytoplasm. It carries out the reaction tRNA(Tyr) + L-tyrosine + ATP = L-tyrosyl-tRNA(Tyr) + AMP + diphosphate + H(+). Its function is as follows. Catalyzes the attachment of tyrosine to tRNA(Tyr) in a two-step reaction: tyrosine is first activated by ATP to form Tyr-AMP and then transferred to the acceptor end of tRNA(Tyr). In Erwinia tasmaniensis (strain DSM 17950 / CFBP 7177 / CIP 109463 / NCPPB 4357 / Et1/99), this protein is Tyrosine--tRNA ligase.